Here is a 309-residue protein sequence, read N- to C-terminus: Porphobilinogen deaminase (309 aa).

Cys244 is modified (S-(dipyrrolylmethanemethyl)cysteine).

Belongs to the HMBS family. Monomer. The cofactor is dipyrromethane.

The catalysed reaction is 4 porphobilinogen + H2O = hydroxymethylbilane + 4 NH4(+). Its pathway is porphyrin-containing compound metabolism; protoporphyrin-IX biosynthesis; coproporphyrinogen-III from 5-aminolevulinate: step 2/4. Its function is as follows. Tetrapolymerization of the monopyrrole PBG into the hydroxymethylbilane pre-uroporphyrinogen in several discrete steps. This chain is Porphobilinogen deaminase, found in Rhizobium meliloti (strain 1021) (Ensifer meliloti).